A 418-amino-acid chain; its full sequence is UDP-N-acetylglucosamine 1-carboxyvinyltransferase (418 aa).

23-24 (KN) contacts phosphoenolpyruvate. Arg-92 serves as a coordination point for UDP-N-acetyl-alpha-D-glucosamine. Cys-116 serves as the catalytic Proton donor. Cys-116 carries the post-translational modification 2-(S-cysteinyl)pyruvic acid O-phosphothioketal. UDP-N-acetyl-alpha-D-glucosamine is bound by residues 121–125 (RPVDL), 161–164 (KVSV), Asp-306, and Ile-328.

It belongs to the EPSP synthase family. MurA subfamily.

It localises to the cytoplasm. The enzyme catalyses phosphoenolpyruvate + UDP-N-acetyl-alpha-D-glucosamine = UDP-N-acetyl-3-O-(1-carboxyvinyl)-alpha-D-glucosamine + phosphate. Its pathway is cell wall biogenesis; peptidoglycan biosynthesis. Functionally, cell wall formation. Adds enolpyruvyl to UDP-N-acetylglucosamine. The protein is UDP-N-acetylglucosamine 1-carboxyvinyltransferase of Vibrio parahaemolyticus serotype O3:K6 (strain RIMD 2210633).